A 405-amino-acid polypeptide reads, in one-letter code: Cysteine desulfurase IscS (405 aa).

Pyridoxal 5'-phosphate is bound by residues 75-76 (AT), asparagine 156, glutamine 184, and 204-206 (SAH). An N6-(pyridoxal phosphate)lysine modification is found at lysine 207. Threonine 244 contacts pyridoxal 5'-phosphate. The active-site Cysteine persulfide intermediate is the cysteine 329. Cysteine 329 contacts [2Fe-2S] cluster.

The protein belongs to the class-V pyridoxal-phosphate-dependent aminotransferase family. NifS/IscS subfamily. As to quaternary structure, homodimer. Forms a heterotetramer with IscU, interacts with other sulfur acceptors. Pyridoxal 5'-phosphate serves as cofactor.

The protein localises to the cytoplasm. The catalysed reaction is (sulfur carrier)-H + L-cysteine = (sulfur carrier)-SH + L-alanine. It participates in cofactor biosynthesis; iron-sulfur cluster biosynthesis. Its function is as follows. Master enzyme that delivers sulfur to a number of partners involved in Fe-S cluster assembly, tRNA modification or cofactor biosynthesis. Catalyzes the removal of elemental sulfur atoms from cysteine to produce alanine. Functions as a sulfur delivery protein for Fe-S cluster synthesis onto IscU, an Fe-S scaffold assembly protein, as well as other S acceptor proteins. The chain is Cysteine desulfurase IscS from Acinetobacter baumannii (strain SDF).